We begin with the raw amino-acid sequence, 216 residues long: 3-isopropylmalate dehydratase small subunit 1 (216 aa).

Belongs to the LeuD family. LeuD type 1 subfamily. As to quaternary structure, heterodimer of LeuC and LeuD.

It carries out the reaction (2R,3S)-3-isopropylmalate = (2S)-2-isopropylmalate. Its pathway is amino-acid biosynthesis; L-leucine biosynthesis; L-leucine from 3-methyl-2-oxobutanoate: step 2/4. In terms of biological role, catalyzes the isomerization between 2-isopropylmalate and 3-isopropylmalate, via the formation of 2-isopropylmaleate. In Bordetella bronchiseptica (strain ATCC BAA-588 / NCTC 13252 / RB50) (Alcaligenes bronchisepticus), this protein is 3-isopropylmalate dehydratase small subunit 1.